Reading from the N-terminus, the 355-residue chain is Beta-ketoacyl-[acyl-carrier-protein] synthase III 1 (355 aa).

Active-site residues include Cys122 and His280. Residues 281 to 285 (QANER) are ACP-binding. Asn311 is an active-site residue.

Belongs to the thiolase-like superfamily. FabH family. As to quaternary structure, homodimer.

The protein resides in the cytoplasm. It carries out the reaction malonyl-[ACP] + acetyl-CoA + H(+) = 3-oxobutanoyl-[ACP] + CO2 + CoA. It participates in lipid metabolism; fatty acid biosynthesis. Functionally, catalyzes the condensation reaction of fatty acid synthesis by the addition to an acyl acceptor of two carbons from malonyl-ACP. Catalyzes the first condensation reaction which initiates fatty acid synthesis and may therefore play a role in governing the total rate of fatty acid production. Possesses both acetoacetyl-ACP synthase and acetyl transacylase activities. Its substrate specificity determines the biosynthesis of branched-chain and/or straight-chain of fatty acids. In Streptomyces avermitilis (strain ATCC 31267 / DSM 46492 / JCM 5070 / NBRC 14893 / NCIMB 12804 / NRRL 8165 / MA-4680), this protein is Beta-ketoacyl-[acyl-carrier-protein] synthase III 1.